A 313-amino-acid polypeptide reads, in one-letter code: Tyrosine recombinase XerC (313 aa).

The 87-residue stretch at 11 to 97 folds into the Core-binding (CB) domain; sequence NSLQKPLERF…SLRSFFDFLI (87 aa). The region spanning 118–298 is the Tyr recombinase domain; that stretch reads PLPKNLDVDE…DFQHLAQAYD (181 aa). Residues R157, K181, H250, R253, and H276 contribute to the active site. Y285 serves as the catalytic O-(3'-phospho-DNA)-tyrosine intermediate.

Belongs to the 'phage' integrase family. XerC subfamily. In terms of assembly, forms a cyclic heterotetrameric complex composed of two molecules of XerC and two molecules of XerD.

Its subcellular location is the cytoplasm. In terms of biological role, site-specific tyrosine recombinase, which acts by catalyzing the cutting and rejoining of the recombining DNA molecules. The XerC-XerD complex is essential to convert dimers of the bacterial chromosome into monomers to permit their segregation at cell division. It also contributes to the segregational stability of plasmids. This Vibrio campbellii (strain ATCC BAA-1116) protein is Tyrosine recombinase XerC.